The primary structure comprises 262 residues: tRNA pseudouridine synthase A (262 aa).

The active-site Nucleophile is Asp54. Tyr113 is a substrate binding site.

The protein belongs to the tRNA pseudouridine synthase TruA family. As to quaternary structure, homodimer.

It carries out the reaction uridine(38/39/40) in tRNA = pseudouridine(38/39/40) in tRNA. In terms of biological role, formation of pseudouridine at positions 38, 39 and 40 in the anticodon stem and loop of transfer RNAs. The protein is tRNA pseudouridine synthase A of Lactobacillus delbrueckii subsp. bulgaricus (strain ATCC BAA-365 / Lb-18).